Reading from the N-terminus, the 382-residue chain is Putative glutamate--cysteine ligase 2-1 (382 aa).

It belongs to the glutamate--cysteine ligase type 2 family. YbdK subfamily.

It carries out the reaction L-cysteine + L-glutamate + ATP = gamma-L-glutamyl-L-cysteine + ADP + phosphate + H(+). ATP-dependent carboxylate-amine ligase which exhibits weak glutamate--cysteine ligase activity. This is Putative glutamate--cysteine ligase 2-1 from Frankia alni (strain DSM 45986 / CECT 9034 / ACN14a).